The primary structure comprises 286 residues: Cytotoxin (286 aa).

A propeptide spanning residues 267 to 286 (TFYNYASLVPDLETRVRSAE) is cleaved from the precursor.

It belongs to the aerolysin family.

The protein resides in the secreted. In terms of biological role, cytotoxin is thought to form hydrophilic pores in cell membranes. The chain is Cytotoxin (ctx) from Pseudomonas aeruginosa.